We begin with the raw amino-acid sequence, 104 residues long: Histone H4 (104 aa).

Residues Met1–Lys21 are disordered.

Belongs to the histone H4 family. In terms of assembly, the nucleosome is a histone octamer containing two molecules each of H2A, H2B, H3 and H4 assembled in one H3-H4 heterotetramer and two H2A-H2B heterodimers. The octamer wraps approximately 147 bp of DNA.

The protein localises to the nucleus. The protein resides in the chromosome. Its function is as follows. Core component of nucleosome. Nucleosomes wrap and compact DNA into chromatin, limiting DNA accessibility to the cellular machineries which require DNA as a template. Histones thereby play a central role in transcription regulation, DNA repair, DNA replication and chromosomal stability. DNA accessibility is regulated via a complex set of post-translational modifications of histones, also called histone code, and nucleosome remodeling. This is Histone H4 from Sterkiella nova (Ciliate).